A 264-amino-acid chain; its full sequence is Ubiquinone biosynthesis protein COQ4 homolog, mitochondrial (264 aa).

The N-terminal 26 residues, 1–26 (MMQRCWQISLPLARRRLIPSLTSKRT), are a transit peptide targeting the mitochondrion. Positions 169, 170, 173, and 185 each coordinate Zn(2+).

It belongs to the COQ4 family. In terms of assembly, component of a multi-subunit COQ enzyme complex. It depends on Zn(2+) as a cofactor.

The protein localises to the mitochondrion inner membrane. The catalysed reaction is a 4-hydroxy-3-methoxy-5-(all-trans-polyprenyl)benzoate + H(+) = a 2-methoxy-6-(all-trans-polyprenyl)phenol + CO2. It participates in cofactor biosynthesis; ubiquinone biosynthesis. In terms of biological role, lyase that catalyzes the C1-decarboxylation of 4-hydroxy-3-methoxy-5-(all-trans-polyprenyl)benzoic acid into 2-methoxy-6-(all-trans-polyprenyl)phenol during ubiquinone biosynthesis. The protein is Ubiquinone biosynthesis protein COQ4 homolog, mitochondrial of Drosophila grimshawi (Hawaiian fruit fly).